Here is a 487-residue protein sequence, read N- to C-terminus: GTPase Der (487 aa).

EngA-type G domains are found at residues 3-167 (FTLA…EGFA) and 203-378 (LQIA…DIWN). Residues 9–16 (GRPNVGKS), 56–60 (DTAGL), 119–122 (NKAE), 209–216 (GRPNAGKS), 256–260 (DTAGM), and 321–324 (NKWD) contribute to the GTP site. One can recognise a KH-like domain in the interval 379 to 463 (RRITTARLNS…PIRLTMRGQG (85 aa)). A disordered region spans residues 459–487 (MRGQGDKNPFKERKFRTPSRLRKHLGKKG). Over residues 471–487 (RKFRTPSRLRKHLGKKG) the composition is skewed to basic residues.

Belongs to the TRAFAC class TrmE-Era-EngA-EngB-Septin-like GTPase superfamily. EngA (Der) GTPase family. In terms of assembly, associates with the 50S ribosomal subunit.

In terms of biological role, GTPase that plays an essential role in the late steps of ribosome biogenesis. In Cereibacter sphaeroides (strain ATCC 17025 / ATH 2.4.3) (Rhodobacter sphaeroides), this protein is GTPase Der.